Reading from the N-terminus, the 156-residue chain is Cyclin-dependent protein kinase inhibitor SMR10 (156 aa).

The disordered stretch occupies residues 52-90; that stretch reads QDQDLEPKSQETNNCSRKEGATVKKEEEEEDDYCKTPTR. Residues 67 to 77 show a composition bias toward basic and acidic residues; it reads SRKEGATVKKE.

Its function is as follows. Probable cyclin-dependent protein kinase (CDK) inhibitor that functions as a repressor of mitosis in the endoreduplication cell cycle. The sequence is that of Cyclin-dependent protein kinase inhibitor SMR10 from Arabidopsis thaliana (Mouse-ear cress).